Reading from the N-terminus, the 263-residue chain is Polyglutamine-binding protein 1 (263 aa).

The 35-residue stretch at 46-80 (EGLPPSWYKVFDPSCGLPYYWNVETDLVSWLSPHD) folds into the WW domain. The segment at 94–263 (NNNADAEDKS…AEASRTKQQD (170 aa)) is disordered. The span at 99–173 (AEDKSDRNLE…DKADREEGKD (75 aa)) shows a compositional bias: basic and acidic residues. One copy of the 1-1; approximate repeat lies at 104 to 110 (DRNLEKV). The segment at 104–138 (DRNLEKVDRNHEKSDRSHEKPDRSHEKADRNHEKN) is 5 X 7 AA approximate tandem repeats of D-R-[NS]-H-E-K-S. Residues 111–117 (DRNHEKS) form a 1-2 repeat. The stretch at 118-124 (DRSHEKP) is one 1-3; approximate repeat. One copy of the 1-4; approximate repeat lies at 125–131 (DRSHEKA). The stretch at 132–138 (DRNHEKN) is one 1-5; approximate repeat. Tandem repeats lie at residues 139–140 (DR), 141–142 (ER), 143–144 (ER), 150–151 (DR), 152–153 (ER), 154–155 (DR), 156–157 (DR), 158–159 (ER), and 160–161 (ER). The tract at residues 139 to 144 (DRERER) is 3 X 2 AA tandem repeats of [DE]-R. The segment at 150–161 (DRERDRDRERER) is 6 X 2 AA tandem repeats of [DE]-R. The segment at 243–253 (YPSPGAVLRAN) is important for interaction with TXNL4A. Ser245 carries the phosphoserine modification.

In terms of assembly, interacts with POU3F2/Brn-2, ATXN1, TXNL4A, HTT and AR. Interaction with ATXN1 correlates positively with the length of the polyglutamine tract. Interacts with RNA polymerase II large subunit in a phosphorylation-dependent manner. Forms a ternary complex with ATXN1 mutant and phosphorylated RNA polymerase II. Interacts (via C-terminus) with TXNL4A and CD2BP2. Interacts (via WW domain) with ATN1 and SF3B1, and may interact with additional splice factors. Interacts (via WW domain) with WBP11; Leading to reduce interaction between PQBP1 and TXNL4A. Interacts with CAPRIN1. Interacts with DDX1. Interacts with SFPQ. Interacts with KHSRP. As to expression, detected in brain cortex and hippocampus neurons (at protein level). Expressed in brain with high level in cerebellar cortex, hippocampus and olfactory bulb.

The protein resides in the nucleus. It localises to the nucleus speckle. It is found in the cytoplasmic granule. Intrinsically disordered protein that acts as a scaffold, and which is involved in different processes, such as pre-mRNA splicing, transcription regulation, innate immunity and neuron development. Interacts with splicing-related factors via the intrinsically disordered region and regulates alternative splicing of target pre-mRNA species. May suppress the ability of POU3F2 to transactivate the DRD1 gene in a POU3F2 dependent manner. Can activate transcription directly or via association with the transcription machinery. May be involved in ATXN1 mutant-induced cell death. The interaction with ATXN1 mutant reduces levels of phosphorylated RNA polymerase II large subunit. Involved in the assembly of cytoplasmic stress granule, possibly by participating in the transport of neuronal RNA granules. Also acts as an innate immune sensor of infection by retroviruses, by detecting the presence of reverse-transcribed DNA in the cytosol. Directly binds retroviral reverse-transcribed DNA in the cytosol and interacts with CGAS, leading to activate the cGAS-STING signaling pathway, triggering type-I interferon production. This Mus musculus (Mouse) protein is Polyglutamine-binding protein 1 (Pqbp1).